The chain runs to 290 residues: Translin-associated protein X (290 aa).

A disordered region spans residues 1-34; the sequence is MNGKEGPGGFRKRKHDNFPHNQRREGKDASSSSP. A compositionally biased stretch (basic and acidic residues) spans 16-28; the sequence is DNFPHNQRREGKD. The interval 73–208 is interaction with C1D; it reads LLHRITSAPD…MRMCINSVGN (136 aa). 2 residues coordinate Mg(2+): E129 and E197. K279 participates in a covalent cross-link: Glycyl lysine isopeptide (Lys-Gly) (interchain with G-Cter in SUMO2).

Belongs to the translin family. As to quaternary structure, ring-shaped heterooctamer of six TSN and two TSNAX subunits. Interacts with GOLGA3, TSNAXIP1, SUN1 and AKAP9. Interacts with the homodimeric form of C1D following gamma-radiation. Interacts with TSN and C1D in a mutually exclusive manner. Sumoylated with SUMO1. In terms of tissue distribution, detected in cerebellum.

The protein resides in the cytoplasm. The protein localises to the perinuclear region. Its subcellular location is the golgi apparatus. It localises to the nucleus. Its function is as follows. Acts in combination with TSN as an endonuclease involved in the activation of the RNA-induced silencing complex (RISC). Possible role in spermatogenesis. This Rattus norvegicus (Rat) protein is Translin-associated protein X (Tsnax).